The primary structure comprises 260 residues: Kallikrein-8 (260 aa).

Positions 1–28 are cleaved as a signal peptide; sequence MGRPRPRAAKTWMFLLLLGGAWAGHSRA. Residues 29–32 constitute a propeptide that is removed on maturation; that stretch reads QEDK. The region spanning 33-257 is the Peptidase S1 domain; that stretch reads VLGGHECQPH…YLDWIKKIIG (225 aa). Disulfide bonds link cysteine 39/cysteine 173, cysteine 58/cysteine 74, cysteine 145/cysteine 246, cysteine 152/cysteine 218, cysteine 184/cysteine 198, and cysteine 208/cysteine 233. Histidine 73 functions as the Charge relay system in the catalytic mechanism. Asparagine 110 carries N-linked (GlcNAc...) asparagine glycosylation. Residue aspartate 120 is the Charge relay system of the active site. Serine 212 (charge relay system) is an active-site residue.

Belongs to the peptidase S1 family. Kallikrein subfamily. Interacts with SPINK9. As to expression, isoform 1 is predominantly expressed in the pancreas. Isoform 2 is expressed in adult brain and hippocampus. Isoform 1 and isoform 2 are found in fetal brain and placenta. Detected in salivary gland, uterus, thymus, breast, testis and kidney but not in spleen, liver, lung or normal ovarian tissue. Displays an 11.5-fold increase in Alzheimer disease hippocampus compared to controls and is overexpressed in some ovarian carcinomas. Expressed at low levels in normal skin while high levels are found in psoriasis vulgaris, seborrheic keratosis, lichen planus and squamous cell carcinoma skin samples. Expressed in the keratinocytes.

Its subcellular location is the secreted. The protein localises to the cytoplasm. It carries out the reaction Cleavage of amide substrates following the basic amino acids Arg or Lys at the P1 position, with a preference for Arg over Lys.. Its activity is regulated as follows. Inhibited by a range of serine protease inhibitors including antipain, aprotinin, leupeptin, benzamidine and soybean trypsin inhibitor. In terms of biological role, serine protease which is capable of degrading a number of proteins such as casein, fibrinogen, kininogen, fibronectin and collagen type IV. Also cleaves L1CAM in response to increased neural activity. Induces neurite outgrowth and fasciculation of cultured hippocampal neurons. Plays a role in the formation and maturation of orphan and small synaptic boutons in the Schaffer-collateral pathway, regulates Schaffer-collateral long-term potentiation in the hippocampus and is required for memory acquisition and synaptic plasticity. Involved in skin desquamation and keratinocyte proliferation. Plays a role in the secondary phase of pathogenesis following spinal cord injury. The polypeptide is Kallikrein-8 (KLK8) (Homo sapiens (Human)).